The sequence spans 1210 residues: MLGLKFLVLLSILWGRVFRLTNTQHSWTAPKDEDASLTPNHASASVSEILSLQVLSATQNPSTQGPAAAERSSEDDVLLQSTSQPSETSTPPEGRHQTPLEKTGTAVVSLPLSLQDKPSIKPSTGAGTVMLANATLKFLQSFSRKSDQQEVSTKSAGDMGNRSARETHLRRSDNSRNQRPSYQKPSFETTRGKNWCAHVHTKLSPTVILDTGSHLPSGRGSCGWYSSGLCSRRSQKTSNAVYRMQHKIVTSLEWRCCPGYIGPNCQLKVEEQQQLAHSNQAESHTAVDQGRAQQQKQDCGDPAMIQKLAEQLSQQERKLSLLQKKVDNASLVADDMRNAYLSLEGKVGEDNSRQFQSFLKALKSKSIEDLLKNIVKEQFKVFQDDMQETTAQIFKTVSSLSEDLESTRQAVLQVNQSFVSSTAQKDFAFMQENQPTWKDITDLKNSIMNIRQEMALTCEKPVKELEAKQAHLEGALRQEHSQIVLYHQSLNETLSKMQEAHIQLLSVLQVSGTENVATEESLNSNVTKYISVLQETASKQGLMLLQMLSDLHVQESKISNLTILLEMEKESARGECEEMLSKCRHDFKFQLKDTEENLHVLNQTLSEVIFPMDIKVDKMSEQLNDLTYDMEILQPLLEQRSSLQHQVIHKPKEATVTRRELQNLIGAINQLNVLTKELTKRHNLLRNEVQSRGEAFERRISEHALETEDGLNKTMTVINNAIDFVQDNYVLKETLSAMTYNPKVCECNQNMDNILTFVSEFQHLNDSIQTLVNNKEKYNFILQIAKALTAIPKDEKLNQLNFQNIYQLFNETTSQVNKCQQNMSHLEENMLSVTKTAKEFETRLQGIESKVTKTLIPYYISFKKGGILSNERDVDLQLKVLNTRFKALEAKSIHLSVSFSLLNKTVRELSMACRNASTGTCGQNALIPRWTKGSLPGSQSSQKSLTELVESIVEIKTQAALSNLTWNVDRLLSDTLANIVKPQKQIKLQKKPNTLKKTVNMTTILIGRTQRNTDTIIHPVAQEHSSCSSFPCQNGGTCISGRSNFICACRHPFMGDTCTVKIKEDDAVAPDFSKGSYRYAPMVAFFVSHTHGMTAPGPILFNDLSVNYGASYNPRTGKFRIPYLGVYIFKYTIESFSAHISGFFVVDGVDKLRFESENADNEIHCDRVLTGDALFELNYGQEVWLRLVKGTIPIKYPPVTTFSGYLLYRT.

The first 19 residues, 1-19 (MLGLKFLVLLSILWGRVFR), serve as a signal peptide directing secretion. The segment at 57–102 (ATQNPSTQGPAAAERSSEDDVLLQSTSQPSETSTPPEGRHQTPLEK) is disordered. The span at 80–92 (QSTSQPSETSTPP) shows a compositional bias: low complexity. N-linked (GlcNAc...) asparagine glycosylation occurs at Asn-133. Polar residues predominate over residues 143 to 155 (SRKSDQQEVSTKS). A disordered region spans residues 143–190 (SRKSDQQEVSTKSAGDMGNRSARETHLRRSDNSRNQRPSYQKPSFETT). Asn-161 carries N-linked (GlcNAc...) asparagine glycosylation. Over residues 163–176 (SARETHLRRSDNSR) the composition is skewed to basic and acidic residues. The span at 177-189 (NQRPSYQKPSFET) shows a compositional bias: polar residues. The EMI domain maps to 192–267 (GKNWCAHVHT…PGYIGPNCQL (76 aa)). Intrachain disulfides connect Cys-196–Cys-257, Cys-222–Cys-230, and Cys-256–Cys-265. O-linked (Fuc) threonine glycosylation occurs at Thr-201. O-linked (Fuc) threonine glycosylation occurs at Thr-250. The disordered stretch occupies residues 276–299 (AHSNQAESHTAVDQGRAQQQKQDC). The stretch at 303–338 (AMIQKLAEQLSQQERKLSLLQKKVDNASLVADDMRN) forms a coiled coil. 14 N-linked (GlcNAc...) asparagine glycosylation sites follow: Asn-328, Asn-415, Asn-491, Asn-525, Asn-560, Asn-602, Asn-712, Asn-765, Asn-810, Asn-822, Asn-903, Asn-915, Asn-963, and Asn-1000. Positions 564-690 (LLEMEKESAR…RHNLLRNEVQ (127 aa)) form a coiled coil. Residues 809–846 (FNETTSQVNKCQQNMSHLEENMLSVTKTAKEFETRLQG) are a coiled coil. The region spanning 1023-1059 (EHSSCSSFPCQNGGTCISGRSNFICACRHPFMGDTCT) is the EGF-like domain. Intrachain disulfides connect Cys-1027-Cys-1038, Cys-1032-Cys-1047, and Cys-1049-Cys-1058. O-linked (Fuc) threonine glycosylation occurs at Thr-1037. The 133-residue stretch at 1078–1210 (RYAPMVAFFV…TFSGYLLYRT (133 aa)) folds into the C1q domain.

In terms of assembly, multimeric. Composed of varying sized, disulfide-linked multimers, the smallest of which is a homotrimer. Proteolysis of the promultimerin in the N-terminal region, leads to the mature p155 form that is stored in platelets. Interacts with factor V/Va. In terms of processing, extensively N-glycosylated. Post-translationally, O-fucosylated within the EMI domain (at Thr-201 and Thr-250) by FUT10/POFUT3 and FUT11/POFUT4. O-fucosylation at Thr-201 and Thr-1037 are required for facilitating protein folding and secretion.

It is found in the secreted. Functionally, carrier protein for platelet (but not plasma) factor V/Va. Plays a role in the storage and stabilization of factor V in platelets. Upon release following platelet activation, may limit platelet and plasma factor Va-dependent thrombin generation. Ligand for integrin alpha-IIb/beta-3 and integrin alpha-V/beta-3 on activated platelets, and may function as an extracellular matrix or adhesive protein. The sequence is that of Multimerin-1 from Mus musculus (Mouse).